The sequence spans 88 residues: Small ribosomal subunit protein bS20 (88 aa).

Residues M1–S22 show a composition bias toward basic residues. Residues M1–S26 form a disordered region.

Belongs to the bacterial ribosomal protein bS20 family.

In terms of biological role, binds directly to 16S ribosomal RNA. In Wigglesworthia glossinidia brevipalpis, this protein is Small ribosomal subunit protein bS20.